We begin with the raw amino-acid sequence, 105 residues long: Nitrogenase-stabilizing/protective protein NifW (105 aa).

Belongs to the NifW family. In terms of assembly, homotrimer; associates with NifD.

In terms of biological role, may protect the nitrogenase Fe-Mo protein from oxidative damage. The polypeptide is Nitrogenase-stabilizing/protective protein NifW (Nostoc punctiforme (strain ATCC 29133 / PCC 73102)).